The chain runs to 83 residues: Small ribosomal subunit protein uS17 (83 aa).

The protein belongs to the universal ribosomal protein uS17 family. Part of the 30S ribosomal subunit.

Functionally, one of the primary rRNA binding proteins, it binds specifically to the 5'-end of 16S ribosomal RNA. This is Small ribosomal subunit protein uS17 from Buchnera aphidicola subsp. Acyrthosiphon pisum (strain 5A).